The primary structure comprises 117 residues: MDKKVARIRRASRARHLMREQGATRLVVHRTPRHIYAQVIAPNGSEVLAAASTVEKVIKEQVKYTGNKEAAAVVGKIVAERALEKGIKAVAFDRSGFKYHGRVQSLADAAREAGLQF.

Belongs to the universal ribosomal protein uL18 family. As to quaternary structure, part of the 50S ribosomal subunit; part of the 5S rRNA/L5/L18/L25 subcomplex. Contacts the 5S and 23S rRNAs.

This is one of the proteins that bind and probably mediate the attachment of the 5S RNA into the large ribosomal subunit, where it forms part of the central protuberance. The polypeptide is Large ribosomal subunit protein uL18 (Glaesserella parasuis serovar 5 (strain SH0165) (Haemophilus parasuis)).